The following is a 306-amino-acid chain: Natural cytotoxicity triggering receptor 1 (306 aa).

A signal peptide spans 1 to 21 (MSSTLRALLCLGLCLSQRISA). The Extracellular portion of the chain corresponds to 22–257 (PKQTLPKPII…WDHTAQNLLR (236 aa)). Ig-like domains lie at 42 to 100 (EKQA…SCIY) and 137 to 192 (GEKV…RCFG). 2 disulfides stabilise this stretch: cysteine 49-cysteine 98 and cysteine 144-cysteine 190. An N-linked (GlcNAc...) asparagine glycan is attached at asparagine 216. Residues 258-278 (MGLAFLVLVALVCLLVEDWLS) traverse the membrane as a helical segment. The Cytoplasmic portion of the chain corresponds to 279–306 (RKRTREQASRASTWEGRRRLNKHKDSEE).

Belongs to the natural cytotoxicity receptor (NCR) family. Interacts with CD3Z and FCER1G. As to expression, expressed in NK cells.

The protein resides in the cell membrane. In terms of biological role, cytotoxicity-activating receptor that may contribute to the increased efficiency of activated natural killer (NK) cells to mediate tumor cell lysis. In Macaca fascicularis (Crab-eating macaque), this protein is Natural cytotoxicity triggering receptor 1 (NCR1).